The primary structure comprises 161 residues: uncharacterized protein (161 aa).

Residues K16–Y36 traverse the membrane as a helical segment.

It is found in the membrane. This is an uncharacterized protein from Encephalitozoon cuniculi (strain GB-M1) (Microsporidian parasite).